Here is a 282-residue protein sequence, read N- to C-terminus: Shikimate dehydrogenase (NADP(+)) (282 aa).

Shikimate-binding positions include 16–18 and threonine 63; that span reads SLS. The active-site Proton acceptor is the lysine 67. 2 residues coordinate shikimate: asparagine 88 and aspartate 103. Residues 128-132 and glycine 243 contribute to the NADP(+) site; that span reads GAGGA.

This sequence belongs to the shikimate dehydrogenase family. As to quaternary structure, homodimer.

It carries out the reaction shikimate + NADP(+) = 3-dehydroshikimate + NADPH + H(+). The protein operates within metabolic intermediate biosynthesis; chorismate biosynthesis; chorismate from D-erythrose 4-phosphate and phosphoenolpyruvate: step 4/7. Its function is as follows. Involved in the biosynthesis of the chorismate, which leads to the biosynthesis of aromatic amino acids. Catalyzes the reversible NADPH linked reduction of 3-dehydroshikimate (DHSA) to yield shikimate (SA). The chain is Shikimate dehydrogenase (NADP(+)) from Xylella fastidiosa (strain 9a5c).